The following is a 516-amino-acid chain: MDIHKEKIIILDFGSQTTQLIARRVREMKVYSEIHPFSLPLEKLKELNPTGIILSGGPCSVYDDDAPHSDAGLFELGVPVFGICYGAQLMIQQLGGSVEKAEKREFGKAEIQILNDSDLFAGLDVARSHQVWMSHGDRVEVIPDQFEVSAESAHSPYAALRHRSKPFVAVQFHPEVVHSIIGTDLLRNFVFGLCKCQATWTMQGFIESNVAAIKEKVGDAHVICALSGGVDSSVVAAMIHKAIGSQLTCVYVNNGLMRIGESEGIIKFFKENTDLHLIDVDASDYFLGKLEGVTDPEVKRQHIGLGFIKIFEEEAHKIDGDVKFLAQGTLYPDVVESVSFRGAAPIKSHHNVGCLPDIMKLSLIEPLRELFKDEVRELGVELGLPDEAVHRQPFPGPGLSIRIMGEVTPERLDIVRRADVIVLDEMKKHGYYNKVWQSFAVLLPIQTVGVMGDFRTYEHVVALRVVDSRDAMTADWSRVPYDILGDISTRIINEVRGVNRVVYDISSKPPATIEWE.

Residues 7-199 (KIIILDFGSQ…VFGLCKCQAT (193 aa)) enclose the Glutamine amidotransferase type-1 domain. Cys84 (nucleophile) is an active-site residue. Residues His173 and Glu175 contribute to the active site. The 192-residue stretch at 200–391 (WTMQGFIESN…LGLPDEAVHR (192 aa)) folds into the GMPS ATP-PPase domain. Residue 227–233 (SGGVDSS) participates in ATP binding.

In terms of assembly, homodimer.

The enzyme catalyses XMP + L-glutamine + ATP + H2O = GMP + L-glutamate + AMP + diphosphate + 2 H(+). It participates in purine metabolism; GMP biosynthesis; GMP from XMP (L-Gln route): step 1/1. Its function is as follows. Catalyzes the synthesis of GMP from XMP. The sequence is that of GMP synthase [glutamine-hydrolyzing] from Desulfotalea psychrophila (strain LSv54 / DSM 12343).